Reading from the N-terminus, the 783-residue chain is Ubiquitin carboxyl-terminal hydrolase 1 (783 aa).

2 disordered regions span residues 1–22 and 34–55; these read MPGV…KKNR and KRAL…YKGS. A compositionally biased stretch (polar residues) spans 7–16; the sequence is SESNGLSRGS. A phosphoserine mark is found at Ser16 and Ser42. A compositionally biased stretch (basic and acidic residues) spans 45–55; sequence NEEKTSEYKGS. Position 67 is a phosphoserine (Ser67). Positions 81–783 constitute a USP domain; it reads VGLNNLGNTC…TPYLLFYKKL (703 aa). The active-site Nucleophile is Cys90. The disordered stretch occupies residues 234-311; the sequence is EEYQKEEMSD…RKAAGDTLEI (78 aa). Composition is skewed to basic and acidic residues over residues 250 to 273 and 284 to 296; these read DNMR…KSDA and ISKE…ENQR. Ser473 carries the post-translational modification Phosphoserine. The active-site Proton acceptor is the His591. Positions 685–722 are disordered; sequence PDKVASTALPENRNSETNNTNGTDESDSNKESSDQTGI. Residue Ser766 is modified to Phosphoserine.

The protein belongs to the peptidase C19 family. In terms of assembly, interacts with FANCD2 and PCNA. Interacts with WDR48. Interacts with ATAD5; the interaction regulates USP1-mediated PCNA deubiquitination. In terms of processing, autocatalytic cleavage of USP1 following UV irradiation inactivates it, leading to an increase in ubiquitinated PCNA, recruitment of POLH and translesion synthesis. Post-translationally, ubiquitinated by the CRL2(KLHDC2) complex following autocatalytic cleavage, leading to its degradation: the CRL2(KLHDC2) complex recognizes the diglycine (Gly-Gly) at the C-terminus.

The protein resides in the nucleus. The catalysed reaction is Thiol-dependent hydrolysis of ester, thioester, amide, peptide and isopeptide bonds formed by the C-terminal Gly of ubiquitin (a 76-residue protein attached to proteins as an intracellular targeting signal).. Functionally, negative regulator of DNA damage repair which specifically deubiquitinates monoubiquitinated FANCD2. Also involved in PCNA-mediated translesion synthesis (TLS) by deubiquitinating monoubiquitinated PCNA. Has almost no deubiquitinating activity by itself and requires the interaction with WDR48 to have a high activity. The polypeptide is Ubiquitin carboxyl-terminal hydrolase 1 (Bos taurus (Bovine)).